The sequence spans 326 residues: High-affinity zinc uptake system protein ZnuA (326 aa).

The N-terminal stretch at 1-22 is a signal peptide; the sequence is MIRPSSLVLAAALGTAALPARA. H59 contacts Zn(2+). Over residues 117–155 the composition is skewed to basic and acidic residues; sequence GGEHEHEHEHEHEHEHEHEHDGHGHAEEQAHHDHDHSGT. The tract at residues 117 to 161 is disordered; sequence GGEHEHEHEHEHEHEHEHEHDGHGHAEEQAHHDHDHSGTDPHAWL. 3 residues coordinate Zn(2+): H158, H222, and D295. The cysteines at positions 267 and 322 are disulfide-linked.

The protein belongs to the bacterial solute-binding protein 9 family. As to quaternary structure, monomer.

The protein resides in the periplasm. Its function is as follows. Part of the ATP-binding cassette (ABC) transport system ZnuABC involved in zinc import. Binds zinc with high affinity and specificity and delivers it to the membrane permease for translocation into the cytoplasm. The polypeptide is High-affinity zinc uptake system protein ZnuA (Paracoccus denitrificans (strain Pd 1222)).